We begin with the raw amino-acid sequence, 343 residues long: Anthranilate phosphoribosyltransferase (343 aa).

5-phospho-alpha-D-ribose 1-diphosphate is bound by residues glycine 86, 89 to 90 (GD), threonine 94, 96 to 99 (NIST), 114 to 122 (KHGNRSASG), and serine 126. Glycine 86 is a binding site for anthranilate. Serine 98 serves as a coordination point for Mg(2+). Position 117 (asparagine 117) interacts with anthranilate. An anthranilate-binding site is contributed by arginine 172. Mg(2+)-binding residues include aspartate 231 and glutamate 232.

It belongs to the anthranilate phosphoribosyltransferase family. Homodimer. The cofactor is Mg(2+).

The enzyme catalyses N-(5-phospho-beta-D-ribosyl)anthranilate + diphosphate = 5-phospho-alpha-D-ribose 1-diphosphate + anthranilate. It participates in amino-acid biosynthesis; L-tryptophan biosynthesis; L-tryptophan from chorismate: step 2/5. Catalyzes the transfer of the phosphoribosyl group of 5-phosphorylribose-1-pyrophosphate (PRPP) to anthranilate to yield N-(5'-phosphoribosyl)-anthranilate (PRA). This Synechococcus sp. (strain JA-3-3Ab) (Cyanobacteria bacterium Yellowstone A-Prime) protein is Anthranilate phosphoribosyltransferase.